We begin with the raw amino-acid sequence, 529 residues long: ATP synthase subunit alpha (529 aa).

Position 173–180 (173–180 (GDRQTGKT)) interacts with ATP.

Belongs to the ATPase alpha/beta chains family. As to quaternary structure, F-type ATPases have 2 components, CF(1) - the catalytic core - and CF(0) - the membrane proton channel. CF(1) has five subunits: alpha(3), beta(3), gamma(1), delta(1), epsilon(1). CF(0) has three main subunits: a(1), b(2) and c(9-12). The alpha and beta chains form an alternating ring which encloses part of the gamma chain. CF(1) is attached to CF(0) by a central stalk formed by the gamma and epsilon chains, while a peripheral stalk is formed by the delta and b chains.

It localises to the cell membrane. The enzyme catalyses ATP + H2O + 4 H(+)(in) = ADP + phosphate + 5 H(+)(out). Functionally, produces ATP from ADP in the presence of a proton gradient across the membrane. The alpha chain is a regulatory subunit. The polypeptide is ATP synthase subunit alpha (Streptomyces avermitilis (strain ATCC 31267 / DSM 46492 / JCM 5070 / NBRC 14893 / NCIMB 12804 / NRRL 8165 / MA-4680)).